Reading from the N-terminus, the 301-residue chain is Methionyl-tRNA formyltransferase (301 aa).

109–112 (SLLP) is a (6S)-5,6,7,8-tetrahydrofolate binding site.

It belongs to the Fmt family.

It carries out the reaction L-methionyl-tRNA(fMet) + (6R)-10-formyltetrahydrofolate = N-formyl-L-methionyl-tRNA(fMet) + (6S)-5,6,7,8-tetrahydrofolate + H(+). Functionally, attaches a formyl group to the free amino group of methionyl-tRNA(fMet). The formyl group appears to play a dual role in the initiator identity of N-formylmethionyl-tRNA by promoting its recognition by IF2 and preventing the misappropriation of this tRNA by the elongation apparatus. This chain is Methionyl-tRNA formyltransferase, found in Ruegeria pomeroyi (strain ATCC 700808 / DSM 15171 / DSS-3) (Silicibacter pomeroyi).